We begin with the raw amino-acid sequence, 400 residues long: 3-phenylpropionate/cinnamic acid dioxygenase ferredoxin--NAD(+) reductase component (400 aa).

An FAD-binding site is contributed by 5 to 36 (TIIIVGGGQAAAMAAASLRQQGFTGELHLFSD). Residue 146–174 (SVVIVGAGTIGLELAASATQRGCKVTVIE) participates in NAD(+) binding.

It belongs to the bacterial ring-hydroxylating dioxygenase ferredoxin reductase family. As to quaternary structure, this dioxygenase system consists of four proteins: the two subunits of the hydroxylase component (HcaE and HcaF), a ferredoxin (HcaC) and a ferredoxin reductase (HcaD). It depends on FAD as a cofactor.

The enzyme catalyses 2 reduced [2Fe-2S]-[ferredoxin] + NAD(+) + H(+) = 2 oxidized [2Fe-2S]-[ferredoxin] + NADH. The protein operates within aromatic compound metabolism; 3-phenylpropanoate degradation. Its function is as follows. Part of the multicomponent 3-phenylpropionate dioxygenase, that converts 3-phenylpropionic acid (PP) and cinnamic acid (CI) into 3-phenylpropionate-dihydrodiol (PP-dihydrodiol) and cinnamic acid-dihydrodiol (CI-dihydrodiol), respectively. The chain is 3-phenylpropionate/cinnamic acid dioxygenase ferredoxin--NAD(+) reductase component from Escherichia coli (strain SMS-3-5 / SECEC).